A 166-amino-acid polypeptide reads, in one-letter code: MTESTSRRPAYARLLDRAVRILAVRDHSEQELRRKLAAPIMGKNGPEEIDATVEDYERVIAWCHEHGYLDDSRFVARFIASRSRKGYGPARIRQELNQKGISREATEKAMRECDIDWCALARDQATRKYGEPLPTVFSEKVKIQRFLLYRGYLMEDIQDIWRNFAD.

The protein belongs to the RecX family.

It is found in the cytoplasm. Its function is as follows. Modulates RecA activity. This chain is Regulatory protein RecX, found in Escherichia fergusonii (strain ATCC 35469 / DSM 13698 / CCUG 18766 / IAM 14443 / JCM 21226 / LMG 7866 / NBRC 102419 / NCTC 12128 / CDC 0568-73).